The following is a 1499-amino-acid chain: MTSWLPQNLQKRLLLYTIKQVSLFSNVDVSNLDVSIGSQSHFGFTDIDLNVCEINLPNIEVLSGRISKLNLQLAVAGNVEISGEGMVFVLKPADGFFDDDSSEQWASSLTKSVMDMTKSILDTELSEYQSKIYKDTNEDIKPPTALDSMMDKVLRVALSKLTINLKNVELQLIISPELMLKISISEVKMISADEKRIADVIGVSAVFSKPEQSVPSYGSSSSDKEDDNTSDSEDPLSTSITYSKLEATSIYLSAMESLVLDSLDGETYQFLNIDKIEVQFQGITSINDLKVHDLKIKINALDIHLENVSSILSHIMSLLNHVQLSNSEDKIRTQELKSYKRFQHEQNIEEDKTLTFVLLNSLKFHLRDNLFIMLTEISLNSSVSPYTSVSISDIQLVLDSKEYINRSDSSEPFLSLNKNSSTSEQKLHLNRDIKVEVDYSLMKQLILFANDYMCLYNQIIERPSTYADPSADPKFLLSSQNVCFLLNLGDLIMEFHFSPFFSNIPHTTFKIPKLSIFSVQNNEKSHIGELTDFEFHSRKSGCFNISGANSKFCASNVNTKTKATLENLEVSILESDMNKIIQCLSGVLGSLPELLLSSGETTSSKNMEKRSVRMMQSSAFLHNRTALSMFCVQINCMKIKISNISGKAFGDLMITARKSLIYQDKYSDLSISFTEFTAQRQYRSEKTDIIFDINHDSNIANFVINRTKVGKIKAYLTGVGIFIHTKWSELFSGQKTENSINEQKKNAKTLVSIPIDIKLYDCALSLKPCRLSTGLAINIPRAQINITKNEITLSTKILDLLLIDDMNLIHETDLGHTTSTSNWYEKQGYSSLVKIDTLSVRFCPGGVASTRVNVHKIDSSICSDSFNALIQTIIDLKPVVTYPENVKYQLEPELVSVFEDLTDQYFTTARISENDLEIYPDTYSNSGESLVFEENYFSPKLESPSKNEVNMAVFEILSNVKISVDEIKLKLYDGYDWKHTRKEINSAVEQLEENFKDGLSCPDAKVFDSIYIPAPRDEDENIKSNINMKIHNEETKEGKMKLRPTKKYKILIQGNGIKVNIQSGNDELRTTSTLPLSDNTYDILNETSVQINNLEIVDNLPTSTWNKFLTRTKLKTTNTLQQSPMFSLRFTMIRPTPHLYATELIFSVHVKPISLHVDQDALEFLTLFFQFKDPRFELIDDYPDIPYIQRFEINSVKILLDYKPKKVDYVGLRSGKTKEFMNFFILDQAKINLKHVILYGIDGFSRLETILTDIWTPDITKTQLPGILGALTPFKPFAGLSYGARALVSVPTEQYQQSGRLGTSLQKGGMVFLRTTGGEFVKLAVRLTSGTQTILESTEKLLGGQGSNGRNIKIKLVEGDEIVDAFIDESILRSTTLFDNTANDNNHLDVILPQGDTQKVISLYADQPKDFYSGLHDAYSSFGRNLNITFDSMKQAKNDIKTANGAQEAVSTVAKAAPLALIRPLIGVTEALSKTLQGLNNQYDQEEIAHIEEKYKSSN.

Residues 211–221 (EQSVPSYGSSS) show a composition bias toward polar residues. The segment at 211-237 (EQSVPSYGSSSSDKEDDNTSDSEDPLS) is disordered. The segment covering 224–234 (KEDDNTSDSED) has biased composition (acidic residues).

This sequence belongs to the ATG2 family.

It is found in the preautophagosomal structure membrane. Its subcellular location is the endoplasmic reticulum membrane. The catalysed reaction is a 1,2-diacyl-sn-glycero-3-phosphocholine(in) = a 1,2-diacyl-sn-glycero-3-phosphocholine(out). It carries out the reaction a 1,2-diacyl-sn-glycero-3-phospho-L-serine(in) = a 1,2-diacyl-sn-glycero-3-phospho-L-serine(out). The enzyme catalyses a 1,2-diacyl-sn-glycero-3-phosphoethanolamine(in) = a 1,2-diacyl-sn-glycero-3-phosphoethanolamine(out). Lipid transfer protein required for autophagosome completion and peroxisome degradation. Tethers the edge of the isolation membrane (IM) to the endoplasmic reticulum (ER) and mediates direct lipid transfer from ER to IM for IM expansion. ATG2 binds to the ER exit site (ERES), which is the membrane source for autophagosome formation, using basic residues in its N-terminal region (NR) and to the expanding edge of the IM through its C-terminal region. The latter binding is assisted by an ATG18-PtdIns3P interaction. ATG2 then extracts phospholipids from the membrane source using its NR and transfers them to ATG9 to the IM through its predicted beta-sheet-rich structure for membrane expansion. This chain is Autophagy-related protein 2, found in Kluyveromyces marxianus (strain DMKU3-1042 / BCC 29191 / NBRC 104275) (Yeast).